Here is a 591-residue protein sequence, read N- to C-terminus: PDZ and LIM domain protein 5 (591 aa).

Ser2 bears the N-acetylserine mark. Ser2 bears the Phosphoserine mark. The 84-residue stretch at 2-85 folds into the PDZ domain; the sequence is SNYSVSLVGP…SLNMTLQRAS (84 aa). The residue at position 89 (Lys89) is an N6-acetyllysine; alternate. Position 89 is an N6-succinyllysine; alternate (Lys89). Residue Lys89 forms a Glycyl lysine isopeptide (Lys-Gly) (interchain with G-Cter in SUMO2); alternate linkage. A phosphoserine mark is found at Glu102, Lys105, Ser111, Ser134, and Ser137. Disordered stretches follow at residues 121–166 and 186–398; these read TNMA…PTPV and SADQ…DQDT. Residues 134–143 are compositionally biased toward polar residues; that stretch reads SVSSPKVTSI. Residues 144–166 show a composition bias toward low complexity; that stretch reads PSPSSAFTPAHAATSSHASPTPV. 2 stretches are compositionally biased toward polar residues: residues 186 to 195 and 205 to 217; these read SADQCSSPPN and RQPT…SESA. 3 positions are modified to phosphoserine: Gln218, Ser228, and Ser260. Basic and acidic residues-rich tracts occupy residues 258 to 273 and 294 to 304; these read DASK…DWRP and HLTESENDNTK. A compositionally biased stretch (low complexity) spans 310-339; sequence QEPSQQPASSGASPLSASEGPESPGSSRPS. Residues Ser313, Pro316, and Ser322 each carry the phosphoserine modification. Lys350 carries the post-translational modification N6-acetyllysine. Residues 353–385 are compositionally biased toward polar residues; it reads GSTSVKSPSWQRPNQAAPSTGRISNNARSSGTG. Phosphoserine occurs at positions 359 and 361. LIM zinc-binding domains lie at 413 to 472, 472 to 531, and 531 to 591; these read PMCA…FFAP, PECG…LFGT, and TICR…SVNF.

Interacts with various PKC isoforms through the LIM domains. Interacts with actin and alpha-actinin through the PDZ domain. Interacts (via LIM domains) with SIPA1L1/SPAR; this interaction may occur preferentially with isoform 1.

The protein localises to the postsynaptic density. It is found in the presynapse. It localises to the postsynapse. The protein resides in the cytoplasm. Its subcellular location is the cytosol. Functionally, may play an important role in the heart development by scaffolding PKC to the Z-disk region. May play a role in the regulation of cardiomyocyte expansion. Isoforms lacking the LIM domains may negatively modulate the scaffolding activity of isoform 1. Overexpression promotes the development of heart hypertrophy. Contributes to the regulation of dendritic spine morphogenesis in neurons. May be required to restrain postsynaptic growth of excitatory synapses. Isoform 1, but not isoform 2, expression favors spine thinning and elongation. This Mus musculus (Mouse) protein is PDZ and LIM domain protein 5.